The following is a 212-amino-acid chain: 3-isopropylmalate dehydratase small subunit (212 aa).

Belongs to the LeuD family. LeuD type 1 subfamily. As to quaternary structure, heterodimer of LeuC and LeuD.

The enzyme catalyses (2R,3S)-3-isopropylmalate = (2S)-2-isopropylmalate. It functions in the pathway amino-acid biosynthesis; L-leucine biosynthesis; L-leucine from 3-methyl-2-oxobutanoate: step 2/4. Its function is as follows. Catalyzes the isomerization between 2-isopropylmalate and 3-isopropylmalate, via the formation of 2-isopropylmaleate. This is 3-isopropylmalate dehydratase small subunit from Pseudomonas aeruginosa (strain LESB58).